Here is a 2126-residue protein sequence, read N- to C-terminus: Phthioceranic/hydroxyphthioceranic acid synthase (2126 aa).

One can recognise a Ketosynthase family 3 (KS3) domain in the interval 24–447; the sequence is VTPVAVIGMA…GTNVHAVVEQ (424 aa). Cys-196 functions as the Acyl-thioester intermediate; for beta-ketoacyl synthase activity in the catalytic mechanism. Active-site for beta-ketoacyl synthase activity residues include His-331 and His-367. The linker domain (LD) stretch occupies residues 449-549; it reads PQTEAQPHAA…VYQPAVGQDD (101 aa). Positions 550–849 are acyltransferase (AT); it reads RGPVWLFSGQ…VAALAGMRRE (300 aa). The Acyl-ester intermediate; for acyltransferase activity role is filled by Ser-641. A dehydratase (DH) region spans residues 909-1191; it reads STVAVHPLLG…LAVCGLRIGT (283 aa). The N-terminal hotdog fold stretch occupies residues 914–1032; the sequence is HPLLGAHVRL…RRASAVLQQV (119 aa). The 285-residue stretch at 914–1198 folds into the PKS/mFAS DH domain; sequence HPLLGAHVRL…IGTGVSERDK (285 aa). His-947 functions as the Proton acceptor; for dehydratase activity in the catalytic mechanism. The tract at residues 1051 to 1198 is C-terminal hotdog fold; sequence PCRVDGEDLR…IGTGVSERDK (148 aa). Asp-1115 acts as the Proton donor; for dehydratase activity in catalysis. Residues 1227–1398 form a pseudo beta-ketoacyl reductase (PsiKR) region; the sequence is KWLLISDCAA…SEEDETAWRD (172 aa). The tract at residues 1426–1750 is enoylreductase (ER); it reads SGMRLQIRTP…EHTGKLVLHI (325 aa). A beta-ketoacyl reductase (KR) region spans residues 1772–2019; it reads GSYIITGGLG…AERSRFFEVF (248 aa). Residues 1780-1783, 1803-1806, 1831-1832, and 1904-1905 each bind NADP(+); these read LGGL, SRTQ, DI, and FS. The Carrier domain maps to 2040–2126; that stretch reads DEWPARLRQL…DAPAAALSSQ (87 aa). Ser-2075 carries the O-(pantetheine 4'-phosphoryl)serine modification.

The cofactor is pantetheine 4'-phosphate.

It catalyses the reaction hexadecanoyl-[(hydroxy)phthioceranic acid synthase] + 7 (S)-methylmalonyl-CoA + 14 NADPH + 21 H(+) = C37-phthioceranyl-[(hydroxy)phthioceranic acid synthase] + 7 CO2 + 14 NADP(+) + 7 CoA + 7 H2O. It carries out the reaction hexadecanoyl-[(hydroxy)phthioceranic acid synthase] + 8 (S)-methylmalonyl-CoA + 16 NADPH + 24 H(+) = C40-phthioceranyl-[(hydroxy)phthioceranic acid synthase] + 8 CO2 + 16 NADP(+) + 8 CoA + 8 H2O. This chain is Phthioceranic/hydroxyphthioceranic acid synthase (pks2), found in Mycobacterium bovis (strain BCG / Pasteur 1173P2).